Consider the following 52-residue polypeptide: Insulin (52 aa).

3 cysteine pairs are disulfide-bonded: Cys7–Cys38, Cys19–Cys51, and Cys37–Cys42.

The protein belongs to the insulin family. As to quaternary structure, heterodimer of a B chain and an A chain linked by two disulfide bonds.

The protein localises to the secreted. Functionally, insulin decreases blood glucose concentration. It increases cell permeability to monosaccharides, amino acids and fatty acids. It accelerates glycolysis, the pentose phosphate cycle, and glycogen synthesis in liver. The sequence is that of Insulin (ins) from Amia calva (Bowfin).